We begin with the raw amino-acid sequence, 96 residues long: Small ribosomal subunit protein bS6 (96 aa).

This sequence belongs to the bacterial ribosomal protein bS6 family.

In terms of biological role, binds together with bS18 to 16S ribosomal RNA. The sequence is that of Small ribosomal subunit protein bS6 (rpsF) from Mycobacterium leprae (strain TN).